The sequence spans 426 residues: Enolase (426 aa).

Q165 contacts (2R)-2-phosphoglycerate. E207 acts as the Proton donor in catalysis. Mg(2+) is bound by residues D244, E285, and D312. (2R)-2-phosphoglycerate-binding residues include K337, R366, S367, and K388. K337 (proton acceptor) is an active-site residue.

Belongs to the enolase family. Mg(2+) is required as a cofactor.

It is found in the cytoplasm. It localises to the secreted. Its subcellular location is the cell surface. It catalyses the reaction (2R)-2-phosphoglycerate = phosphoenolpyruvate + H2O. The protein operates within carbohydrate degradation; glycolysis; pyruvate from D-glyceraldehyde 3-phosphate: step 4/5. Its function is as follows. Catalyzes the reversible conversion of 2-phosphoglycerate (2-PG) into phosphoenolpyruvate (PEP). It is essential for the degradation of carbohydrates via glycolysis. This chain is Enolase, found in Thermosynechococcus vestitus (strain NIES-2133 / IAM M-273 / BP-1).